Here is an 84-residue protein sequence, read N- to C-terminus: Small ribosomal subunit protein bS20 (84 aa).

It belongs to the bacterial ribosomal protein bS20 family.

In terms of biological role, binds directly to 16S ribosomal RNA. This chain is Small ribosomal subunit protein bS20, found in Limosilactobacillus reuteri (strain DSM 20016) (Lactobacillus reuteri).